The following is a 77-amino-acid chain: U9-lycotoxin-Ls1a (77 aa).

The signal sequence occupies residues 1-20 (MKLLLFTALVLVVIVSLIEA). Residues 21-26 (EAENER) constitute a propeptide that is removed on maturation.

The protein belongs to the neurotoxin 19 (CSTX) family. 08 (U8-Lctx) subfamily. Contains 4 disulfide bonds. In terms of tissue distribution, expressed by the venom gland.

It localises to the secreted. In Lycosa singoriensis (Wolf spider), this protein is U9-lycotoxin-Ls1a.